The primary structure comprises 416 residues: N-acetylmuramoyl-L-alanine amidase AmiC (416 aa).

Positions 1–26 (MIKLTRRQIIRRTAGTLFALSPIASA) are cleaved as a signal peptide. Residues 166–191 (RGSPEADLAQNTTPQPGRGRNGRRPV) are disordered. The MurNAc-LAA domain occupies 192–405 (IMLDPGHGGE…CAQSIASGVQ (214 aa)).

This sequence belongs to the N-acetylmuramoyl-L-alanine amidase 3 family.

It is found in the periplasm. The enzyme catalyses Hydrolyzes the link between N-acetylmuramoyl residues and L-amino acid residues in certain cell-wall glycopeptides.. Its function is as follows. Cell-wall hydrolase involved in septum cleavage during cell division. In Neisseria meningitidis serogroup B (strain ATCC BAA-335 / MC58), this protein is N-acetylmuramoyl-L-alanine amidase AmiC (amiC).